A 417-amino-acid chain; its full sequence is MFQCLEPERNEETGPVYVRERGKLSVVGSHVSELRTRPCRLFSKGFSVELCGKQEDTSRHRQKPFIFTYTKEGSLRYSAKSLFTLTLDLITDNIHYVDSLMGFPDQIAEKLFTAAEAKHKFFTPCNGVMALRKFTEAYGDLVLSSLCLRGRYLLISERLEEIKSFQCLRSLDLSCCKLGDEHELLEHLSSDPMSSLTELYLKDNCFSDTGIRKMTASLRVLGKGLDALKVLDLSSNPGITDRGVLFLFGFKLLQFLDLSDTSIQDRSRTVKKIETKIGLVLSKKPIIQFEHRNCRTQGWAEQLLDQWENYIFSAIKPKDTLKSRKAAQQFYGKETKQNPLDSGICTLLTPVEQKQTHLQFFRPEEQKDSDSSKSDKRQRSTKRTGADPGQEDCTIAPATKRPRVTLTAADWDLLNSY.

4 LRR repeats span residues 167-188 (CLRS…LEHL), 195-215 (SLTE…RKMT), 227-249 (ALKV…FLFG), and 252-273 (LLQF…VKKI). A disordered region spans residues 360–399 (FFRPEEQKDSDSSKSDKRQRSTKRTGADPGQEDCTIAPAT). Residues 362–378 (RPEEQKDSDSSKSDKRQ) are compositionally biased toward basic and acidic residues.

Belongs to the LRRC42 family.

This Xenopus tropicalis (Western clawed frog) protein is Leucine-rich repeat-containing protein 42 (lrrc42).